A 141-amino-acid chain; its full sequence is Venom protein family 1 protein 1 (141 aa).

The N-terminal stretch at 1 to 17 is a signal peptide; sequence MKSFIVVLCCLFAITYG. A disulfide bridge connects residues Cys62 and Cys139.

It belongs to the insect vpf1 family. As to expression, expressed by the venom gland (posterior main gland) (at protein level).

The protein resides in the secreted. The sequence is that of Venom protein family 1 protein 1 from Platymeris rhadamanthus (Red spot assassin bug).